The sequence spans 351 residues: Uroporphyrinogen decarboxylase (351 aa).

Residues 25–29 (RQAGR), Phe43, Asp74, Tyr151, Ser206, and His325 each bind substrate.

Belongs to the uroporphyrinogen decarboxylase family. Homodimer.

It localises to the cytoplasm. It catalyses the reaction uroporphyrinogen III + 4 H(+) = coproporphyrinogen III + 4 CO2. It functions in the pathway porphyrin-containing compound metabolism; protoporphyrin-IX biosynthesis; coproporphyrinogen-III from 5-aminolevulinate: step 4/4. Functionally, catalyzes the decarboxylation of four acetate groups of uroporphyrinogen-III to yield coproporphyrinogen-III. This Chlorobaculum tepidum (strain ATCC 49652 / DSM 12025 / NBRC 103806 / TLS) (Chlorobium tepidum) protein is Uroporphyrinogen decarboxylase.